We begin with the raw amino-acid sequence, 416 residues long: Phosphoglycerate kinase (416 aa).

14 residues coordinate (2R)-3-phosphoglycerate: Val-22, Asp-23, Phe-24, Asn-25, Gln-37, Arg-38, Ser-61, His-62, Gly-64, Arg-65, Leu-120, Arg-121, His-168, and Arg-169. Gly-212 lines the ADP pocket. Gly-212 lines the CDP pocket. AMP is bound by residues Ala-213 and Lys-214. Ala-213 contacts ATP. Mg(2+) is bound at residue Ala-213. Position 217 (Asp-217) interacts with CDP. Mg(2+) is bound at residue Asp-217. Lys-218 is a binding site for AMP. Lys-218 contacts ATP. Gly-236 lines the ADP pocket. CDP is bound at residue Gly-236. Residues Gly-237 and Gly-311 each coordinate AMP. Residues Gly-237 and Gly-311 each coordinate ATP. Residues Gly-336 and Phe-341 each contribute to the CDP site. Phe-341 serves as a coordination point for ADP. Glu-342 serves as a coordination point for AMP. ATP is bound by residues Glu-342, Asp-373, and Thr-374. Asp-373 lines the Mg(2+) pocket.

The protein belongs to the phosphoglycerate kinase family. As to quaternary structure, monomer. Mg(2+) serves as cofactor. In terms of tissue distribution, expressed in all cells of the worm (at protein level), higher expression in the cells associated with the tubercles (tegumental modifications), the muscle and along the tegument.

The enzyme catalyses (2R)-3-phosphoglycerate + ATP = (2R)-3-phospho-glyceroyl phosphate + ADP. It functions in the pathway carbohydrate degradation; glycolysis; pyruvate from D-glyceraldehyde 3-phosphate: step 2/5. Its function is as follows. Involved in the seventh step in glycolysis. Catalyzes the conversion of 1,3-bisphosphoglycerate ((2R)-3-phospho-glyceroyl phosphate) to 3-phosphoglycerate ((2R)-3-phosphoglycerate) and results in the formation of ATP. Associated with the tegument to provide the energy needed for the tegumental repair resulting from immune damage. The protein is Phosphoglycerate kinase (PGK) of Schistosoma mansoni (Blood fluke).